A 461-amino-acid chain; its full sequence is tRNA modification GTPase MnmE (461 aa).

3 residues coordinate (6S)-5-formyl-5,6,7,8-tetrahydrofolate: R23, E88, and R127. The 160-residue stretch at 223-382 folds into the TrmE-type G domain; the sequence is GLSTVIVGKP…IEDALAEMVY (160 aa). N233 provides a ligand contact to K(+). GTP is bound by residues 233 to 238, 252 to 258, and 277 to 280; these read NVGKSS, TDVPGTT, and DTAG. Position 237 (S237) interacts with Mg(2+). 3 residues coordinate K(+): T252, V254, and T257. T258 lines the Mg(2+) pocket. K461 provides a ligand contact to (6S)-5-formyl-5,6,7,8-tetrahydrofolate.

It belongs to the TRAFAC class TrmE-Era-EngA-EngB-Septin-like GTPase superfamily. TrmE GTPase family. Homodimer. Heterotetramer of two MnmE and two MnmG subunits. It depends on K(+) as a cofactor.

Its subcellular location is the cytoplasm. Exhibits a very high intrinsic GTPase hydrolysis rate. Involved in the addition of a carboxymethylaminomethyl (cmnm) group at the wobble position (U34) of certain tRNAs, forming tRNA-cmnm(5)s(2)U34. The chain is tRNA modification GTPase MnmE from Alkaliphilus oremlandii (strain OhILAs) (Clostridium oremlandii (strain OhILAs)).